The following is a 626-amino-acid chain: DEAD-box ATP-dependent RNA helicase 16 (626 aa).

The disordered stretch occupies residues 1-48 (MGKTKLKPVEDVNSEVVDEVEKAEEVEEQRNDREQEEEQKEEEAPKSF). The stretch at 9-47 (VEDVNSEVVDEVEKAEEVEEQRNDREQEEEQKEEEAPKS) forms a coiled coil. Acidic residues predominate over residues 12–27 (VNSEVVDEVEKAEEVE). Residues 46 to 74 (KSFEELGLDSRLIRALTKKGIEKPTLIQQ) carry the Q motif motif. The Helicase ATP-binding domain maps to 77 to 259 (IPYILEGKDV…KLILHNPIVL (183 aa)). 90–97 (AKTGSGKT) contacts ATP. The DEAD box motif lies at 207–210 (DEAD). Residues 293–477 (ALLKLEVVQK…PFPLLTENAV (185 aa)) form the Helicase C-terminal domain. Positions 356 to 385 (IATDDNSQTKKQKEEAKGEANKENKKNNKR) form a coiled coil. Positions 363-381 (QTKKQKEEAKGEANKENKK) are enriched in basic and acidic residues. Disordered regions lie at residues 363 to 388 (QTKKQKEEAKGEANKENKKNNKRSKP) and 568 to 626 (AMGN…QKTV).

This sequence belongs to the DEAD box helicase family. DDX56/DBP9 subfamily.

It carries out the reaction ATP + H2O = ADP + phosphate + H(+). This is DEAD-box ATP-dependent RNA helicase 16 (RH16) from Arabidopsis thaliana (Mouse-ear cress).